A 351-amino-acid chain; its full sequence is MHREDDSTSTGRREERLSTGKGDSLQPGPDQRIFQTALYRPQRHGLILFPQRLYGNCLAPLAYSNYVAPRELHSSIHAEGRTLSVRLIMLFVNTSKRSRTLPPVGSTVMRILVNLCQLLSAEFQLLQGSQRLIFKLCYRTCPDQRRGDTRVAQCPGDSHLSQCLTATFRNGVQRPDAPQQLFVLCTGLQGAALIRPRPFGDSVQIAGGQQSLSQRRKDNAAGSDLAKGIEQAIFDPAIEHVVIGLMNEKRNPLFLQDRGSLLRQFRRIAGNPHIKRLALTVQMRERSHRLFQRRGGVHTVRIEDVDIVEPHPLQRPGRGWRSGICDLPPMPPYGPGHMSQPAFEEMIISSR.

Residues 1–18 (MHREDDSTSTGRREERLS) show a composition bias toward basic and acidic residues. Positions 1 to 29 (MHREDDSTSTGRREERLSTGKGDSLQPGP) are disordered.

In terms of biological role, confers an increase in glyphosate resistance when expressed in E.coli. In Pseudomonas sp. (strain PG2982), this protein is Increased glyphosate resistance protein.